A 271-amino-acid polypeptide reads, in one-letter code: Ribose-phosphate pyrophosphokinase 2 (271 aa).

Residues 34 to 36 and 82 to 83 contribute to the ATP site; these read DGE and RQ. Positions 115 and 150 each coordinate Mg(2+). Lysine 173 is a catalytic residue. Residues arginine 175, aspartate 199, and 203–207 each bind D-ribose 5-phosphate; that span reads STGGT.

It belongs to the ribose-phosphate pyrophosphokinase family. Class III (archaeal) subfamily. Requires Mg(2+) as cofactor.

It is found in the cytoplasm. The catalysed reaction is D-ribose 5-phosphate + ATP = 5-phospho-alpha-D-ribose 1-diphosphate + AMP + H(+). It participates in metabolic intermediate biosynthesis; 5-phospho-alpha-D-ribose 1-diphosphate biosynthesis; 5-phospho-alpha-D-ribose 1-diphosphate from D-ribose 5-phosphate (route I): step 1/1. Functionally, involved in the biosynthesis of the central metabolite phospho-alpha-D-ribosyl-1-pyrophosphate (PRPP) via the transfer of pyrophosphoryl group from ATP to 1-hydroxyl of ribose-5-phosphate (Rib-5-P). The polypeptide is Ribose-phosphate pyrophosphokinase 2 (Archaeoglobus fulgidus (strain ATCC 49558 / DSM 4304 / JCM 9628 / NBRC 100126 / VC-16)).